Reading from the N-terminus, the 196-residue chain is Potassium-transporting ATPase KdpC subunit (196 aa).

A helical transmembrane segment spans residues 7–27 (PALVLFFVLTLLTGVAYPLAV).

It belongs to the KdpC family. In terms of assembly, the system is composed of three essential subunits: KdpA, KdpB and KdpC.

Its subcellular location is the cell inner membrane. In terms of biological role, part of the high-affinity ATP-driven potassium transport (or Kdp) system, which catalyzes the hydrolysis of ATP coupled with the electrogenic transport of potassium into the cytoplasm. This subunit acts as a catalytic chaperone that increases the ATP-binding affinity of the ATP-hydrolyzing subunit KdpB by the formation of a transient KdpB/KdpC/ATP ternary complex. This Polaromonas naphthalenivorans (strain CJ2) protein is Potassium-transporting ATPase KdpC subunit.